The primary structure comprises 62 residues: Large ribosomal subunit protein uL30 (62 aa).

This sequence belongs to the universal ribosomal protein uL30 family. In terms of assembly, part of the 50S ribosomal subunit.

The sequence is that of Large ribosomal subunit protein uL30 from Geobacillus thermodenitrificans (strain NG80-2).